Here is a 256-residue protein sequence, read N- to C-terminus: Geranylgeranylglyceryl phosphate synthase (256 aa).

Mg(2+)-binding residues include aspartate 28 and serine 53. Sn-glycerol 1-phosphate is bound by residues 172-178 (YLEAGSG), 203-204 (GG), and 225-226 (GT).

This sequence belongs to the GGGP/HepGP synthase family. Group II subfamily. Mg(2+) is required as a cofactor.

It localises to the cytoplasm. The enzyme catalyses sn-glycerol 1-phosphate + (2E,6E,10E)-geranylgeranyl diphosphate = sn-3-O-(geranylgeranyl)glycerol 1-phosphate + diphosphate. It participates in membrane lipid metabolism; glycerophospholipid metabolism. Its function is as follows. Prenyltransferase that catalyzes the transfer of the geranylgeranyl moiety of geranylgeranyl diphosphate (GGPP) to the C3 hydroxyl of sn-glycerol-1-phosphate (G1P). This reaction is the first ether-bond-formation step in the biosynthesis of archaeal membrane lipids. This is Geranylgeranylglyceryl phosphate synthase from Methanococcus maripaludis (strain DSM 14266 / JCM 13030 / NBRC 101832 / S2 / LL).